We begin with the raw amino-acid sequence, 201 residues long: Holliday junction branch migration complex subunit RuvA (201 aa).

The tract at residues 1-63 (MIASVRGEVL…EDSMTLYGFA (63 aa)) is domain I. Residues 64–142 (DTEARDLFGL…LVPVQAGPPG (79 aa)) form a domain II region. The flexible linker stretch occupies residues 143 to 153 (STPAVAATPVR). A domain III region spans residues 153–201 (REQVVEALTGLGFPLKQAEQALDTVLAEQPAADTSTALRAALSLLGKNR).

Belongs to the RuvA family. Homotetramer. Forms an RuvA(8)-RuvB(12)-Holliday junction (HJ) complex. HJ DNA is sandwiched between 2 RuvA tetramers; dsDNA enters through RuvA and exits via RuvB. An RuvB hexamer assembles on each DNA strand where it exits the tetramer. Each RuvB hexamer is contacted by two RuvA subunits (via domain III) on 2 adjacent RuvB subunits; this complex drives branch migration. In the full resolvosome a probable DNA-RuvA(4)-RuvB(12)-RuvC(2) complex forms which resolves the HJ.

Its subcellular location is the cytoplasm. In terms of biological role, the RuvA-RuvB-RuvC complex processes Holliday junction (HJ) DNA during genetic recombination and DNA repair, while the RuvA-RuvB complex plays an important role in the rescue of blocked DNA replication forks via replication fork reversal (RFR). RuvA specifically binds to HJ cruciform DNA, conferring on it an open structure. The RuvB hexamer acts as an ATP-dependent pump, pulling dsDNA into and through the RuvAB complex. HJ branch migration allows RuvC to scan DNA until it finds its consensus sequence, where it cleaves and resolves the cruciform DNA. The polypeptide is Holliday junction branch migration complex subunit RuvA (Nocardia farcinica (strain IFM 10152)).